A 352-amino-acid polypeptide reads, in one-letter code: Protein CIA1 (352 aa).

WD repeat units lie at residues 18-64 (GHTD…RSWT), 72-111 (THTR…FECI), 116-155 (GHEN…EYDC), 161-200 (GHTQ…GEYQ), 211-250 (GHSS…MQSG), 265-303 (YHDR…SVDG), and 315-352 (AHEN…ATKP).

It belongs to the WD repeat CIA1 family. In terms of assembly, part of a complex composed of AE7, CIA1, MMS19 and NAR1. Interacts with AE7 and NAR1.

The protein resides in the nucleus. It is found in the cytoplasm. Its function is as follows. Essential component of the cytosolic iron-sulfur (Fe-S) protein assembly (CIA) machinery. Required for the maturation of extramitochondrial Fe/S proteins. The sequence is that of Protein CIA1 from Arabidopsis thaliana (Mouse-ear cress).